A 506-amino-acid polypeptide reads, in one-letter code: Acetaldehyde dehydrogenase 2 (506 aa).

An NAD(+)-binding site is contributed by 240 to 245; the sequence is GETTTG. Residues Glu-262 and Cys-301 contribute to the active site.

It belongs to the aldehyde dehydrogenase family.

It carries out the reaction an aldehyde + NAD(+) + H2O = a carboxylate + NADH + 2 H(+). Its pathway is alcohol metabolism; ethanol degradation; acetate from ethanol: step 2/2. It participates in ketone degradation; acetoin degradation. Functionally, involved in the catabolism of acetoin and ethanol. This is Acetaldehyde dehydrogenase 2 (acoD) from Cupriavidus necator (strain ATCC 17699 / DSM 428 / KCTC 22496 / NCIMB 10442 / H16 / Stanier 337) (Ralstonia eutropha).